Here is a 331-residue protein sequence, read N- to C-terminus: Phenylalanine--tRNA ligase alpha subunit (331 aa).

Residue Glu254 coordinates Mg(2+).

Belongs to the class-II aminoacyl-tRNA synthetase family. Phe-tRNA synthetase alpha subunit type 1 subfamily. As to quaternary structure, tetramer of two alpha and two beta subunits. Requires Mg(2+) as cofactor.

It is found in the cytoplasm. It catalyses the reaction tRNA(Phe) + L-phenylalanine + ATP = L-phenylalanyl-tRNA(Phe) + AMP + diphosphate + H(+). This is Phenylalanine--tRNA ligase alpha subunit from Blochmanniella pennsylvanica (strain BPEN).